A 626-amino-acid chain; its full sequence is Endogenous retrovirus group S71 member 1 Env polyprotein (626 aa).

A signal peptide spans 1-38 (MGPEAWVRPLKTAPKPGEAIRLILFIYLSCFFLPVMSS). The tract at residues 39–438 (EPSYSFLLTS…PPELHPRLHQ (400 aa)) is surface protein. Over 39 to 575 (EPSYSFLLTS…FNWNPWLTTL (537 aa)) the chain is Extracellular. A CXXC motif is present at residues 302–305 (CWLC). Residues 439–459 (AVPLLVPLLAGLSIAGSAAIG) form a fusion peptide region. Residues 439–626 (AVPLLVPLLA…KTQYDTLVNN (188 aa)) are transmembrane protein. The CKS-17 motif lies at 503–519 (LQNCRCLDLLFLSQGGL). A disulfide bridge links cysteine 520 with cysteine 527. A CX6CC motif is present at residues 520-528 (CAALGESCC). Residues 576-596 (ITGLAGPLLILLLSLIFGPCI) traverse the membrane as a helical segment. The Cytoplasmic segment spans residues 597–626 (LNSFLNFIKQRIASVKLTYLKTQYDTLVNN).

It belongs to the gamma type-C retroviral envelope protein family. HERV class-I T env subfamily. The CXXC motif is highly conserved across a broad range of retroviral envelope proteins. It is thought to participate in the formation of a labile disulfide bond possibly with the CX6CC motif present in the transmembrane domain. In terms of tissue distribution, expressed at higher level in thyroid. Expressed at lower level in adrenal, bone marrow, brain, breast, kidney, ovary, placenta, prostate, skin, testis and trachea.

The protein localises to the cell membrane. Retroviral envelope proteins mediate receptor recognition and membrane fusion during early infection. Endogenous envelope proteins may have kept, lost or modified their original function during evolution. This endogenous envelope protein has lost its original fusogenic properties. The chain is Endogenous retrovirus group S71 member 1 Env polyprotein (ERVS71-1) from Homo sapiens (Human).